Consider the following 292-residue polypeptide: NADH-cytochrome b5 reductase 1 (292 aa).

A helical membrane pass occupies residues 12–32 (ALLVVGTAIFAVLVGAKFLGG). An FAD-binding FR-type domain is found at 43–148 (TEFQNFVLKE…RGPKGAMVYT (106 aa)). FAD is bound by residues 128–143 (TTLK…GPKG) and 154–191 (HIGM…QVDL).

This sequence belongs to the flavoprotein pyridine nucleotide cytochrome reductase family. As to quaternary structure, monomer. Component of the 2-(3-amino-3-carboxypropyl)histidine synthase complex composed of dph1, dph2, dph3 and a NADH-dependent reductase, predominantly cbr1. FAD is required as a cofactor.

Its subcellular location is the mitochondrion outer membrane. It catalyses the reaction 2 Fe(III)-[cytochrome b5] + NADH = 2 Fe(II)-[cytochrome b5] + NAD(+) + H(+). It carries out the reaction 2 Fe(3+)-[Dph3] + NADH = 2 Fe(2+)-[Dph3] + NAD(+) + H(+). Its pathway is protein modification; peptidyl-diphthamide biosynthesis. In terms of biological role, NADH-dependent reductase for dph3 and cytochrome b5. Required for the first step of diphthamide biosynthesis, a post-translational modification of histidine which occurs in elongation factor 2. Dph1 and dph2 transfer a 3-amino-3-carboxypropyl (ACP) group from S-adenosyl-L-methionine (SAM) to a histidine residue, the reaction is assisted by a reduction system comprising dph3 and a NADH-dependent reductase, predominantly cbr1. By reducing dph3, also involved in the formation of the tRNA wobble base modification mcm5s 2U (5-methoxycarbonylmethyl-2-thiouridine), mediated by the elongator complex. The cytochrome b5/NADH cytochrome b5 reductase electron transfer system supports the catalytic activity of several sterol biosynthetic enzymes. The chain is NADH-cytochrome b5 reductase 1 (cbr1) from Aspergillus oryzae (strain ATCC 42149 / RIB 40) (Yellow koji mold).